Here is a 166-residue protein sequence, read N- to C-terminus: NADH-quinone oxidoreductase subunit B 1 (166 aa).

4 residues coordinate [4Fe-4S] cluster: C39, C40, C106, and C135.

This sequence belongs to the complex I 20 kDa subunit family. As to quaternary structure, NDH-1 is composed of 14 different subunits. Subunits NuoB, C, D, E, F, and G constitute the peripheral sector of the complex. [4Fe-4S] cluster serves as cofactor.

It localises to the cell membrane. The enzyme catalyses a quinone + NADH + 5 H(+)(in) = a quinol + NAD(+) + 4 H(+)(out). NDH-1 shuttles electrons from NADH, via FMN and iron-sulfur (Fe-S) centers, to quinones in the respiratory chain. The immediate electron acceptor for the enzyme in this species is believed to be a menaquinone. Couples the redox reaction to proton translocation (for every two electrons transferred, four hydrogen ions are translocated across the cytoplasmic membrane), and thus conserves the redox energy in a proton gradient. The protein is NADH-quinone oxidoreductase subunit B 1 of Symbiobacterium thermophilum (strain DSM 24528 / JCM 14929 / IAM 14863 / T).